We begin with the raw amino-acid sequence, 232 residues long: Phosphoglycolate phosphatase (232 aa).

Residue Asp13 is the Nucleophile of the active site. The Mg(2+) site is built by Asp13, Asp15, and Asp175.

The protein belongs to the HAD-like hydrolase superfamily. CbbY/CbbZ/Gph/YieH family. As to quaternary structure, monomer. Mg(2+) is required as a cofactor. It depends on chloride as a cofactor.

It catalyses the reaction 2-phosphoglycolate + H2O = glycolate + phosphate. It functions in the pathway organic acid metabolism; glycolate biosynthesis; glycolate from 2-phosphoglycolate: step 1/1. In terms of biological role, specifically catalyzes the dephosphorylation of 2-phosphoglycolate. Is involved in the dissimilation of the intracellular 2-phosphoglycolate formed during the DNA repair of 3'-phosphoglycolate ends, a major class of DNA lesions induced by oxidative stress. This Yersinia pseudotuberculosis serotype I (strain IP32953) protein is Phosphoglycolate phosphatase.